The primary structure comprises 642 residues: Mini-chromosome maintenance complex-binding protein (642 aa).

Polar residues predominate over residues 151 to 161; sequence ARVSPSTSYTP. Positions 151-200 are disordered; that stretch reads ARVSPSTSYTPSRHKRSYEDDEDMDLQPNKQKDQHSGARQAGGLGGLHWR. A Phosphoserine modification is found at S154. T160 carries the phosphothreonine modification. Phosphoserine occurs at positions 167 and 298.

This sequence belongs to the MCMBP family. In terms of assembly, interacts with the MCM complex: associates with the MCM3-7 complex which lacks MCM2, while it does not interact with the MCM complex when MCM2 is present (MCM2-7 complex). Interacts with the RPA complex, when composed of all RPA1, RPA2 and RPA3 components, but not with RPA1 or RPA2 alone.

It is found in the nucleus. Its function is as follows. Associated component of the MCM complex that acts as a regulator of DNA replication. Binds to the MCM complex during late S phase and promotes the disassembly of the MCM complex from chromatin, thereby acting as a key regulator of pre-replication complex (pre-RC) unloading from replicated DNA. Can dissociate the MCM complex without addition of ATP; probably acts by destabilizing interactions of each individual subunits of the MCM complex. Required for sister chromatid cohesion. The polypeptide is Mini-chromosome maintenance complex-binding protein (Mcmbp) (Rattus norvegicus (Rat)).